A 233-amino-acid polypeptide reads, in one-letter code: ATP synthase subunit C lysine N-methyltransferase (233 aa).

Residue methionine 1 is modified to N-acetylmethionine. Residues 38–58 form a helical membrane-spanning segment; it reads FLLTGLVGGTLVAVYAVATPF. The tract at residues 56–90 is required for mitochondrial location; sequence TPFVTPALRKVCLPFVPATTKQIENVVKMLRCRRG.

Belongs to the ANT/ATPSC lysine N-methyltransferase family. As to expression, ubiquitously expressed.

Its subcellular location is the mitochondrion membrane. The catalysed reaction is L-lysyl-[protein] + 3 S-adenosyl-L-methionine = N(6),N(6),N(6)-trimethyl-L-lysyl-[protein] + 3 S-adenosyl-L-homocysteine + 3 H(+). In terms of biological role, mitochondrial protein-lysine N-methyltransferase that trimethylates ATP synthase subunit C, ATP5MC1 and ATP5MC2. Trimethylation is required for proper incorporation of the C subunit into the ATP synthase complex and mitochondrial respiration. Promotes chronic pain. Involved in persistent inflammatory and neuropathic pain: methyltransferase activity in the mitochondria of sensory neurons promotes chronic pain via a pathway that depends on the production of reactive oxygen species (ROS) and on the engagement of spinal cord microglia. This chain is ATP synthase subunit C lysine N-methyltransferase, found in Homo sapiens (Human).